The following is a 169-amino-acid chain: Large ribosomal subunit protein uL18 (169 aa).

The protein belongs to the universal ribosomal protein uL18 family. In terms of assembly, part of the 50S ribosomal subunit. Contacts the 5S and 23S rRNAs.

This is one of the proteins that bind and probably mediate the attachment of the 5S RNA into the large ribosomal subunit, where it forms part of the central protuberance. In Methanothrix thermoacetophila (strain DSM 6194 / JCM 14653 / NBRC 101360 / PT) (Methanosaeta thermophila), this protein is Large ribosomal subunit protein uL18.